The following is a 318-amino-acid chain: L-malyl-CoA/beta-methylmalyl-CoA lyase (318 aa).

Substrate is bound by residues Phe19, Arg24, Lys30, and Arg76. Mg(2+) contacts are provided by Glu141 and Asp168. Residues 167-168 (AD) and 251-252 (IH) each bind substrate.

This sequence belongs to the HpcH/HpaI aldolase family. As to quaternary structure, homohexamer. Dimer of trimers. Requires Mg(2+) as cofactor. Mn(2+) serves as cofactor.

It carries out the reaction (S)-malyl-CoA = glyoxylate + acetyl-CoA. The enzyme catalyses (2R,3S)-beta-methylmalyl-CoA = propanoyl-CoA + glyoxylate. In terms of biological role, involved in the ethylmalonyl-CoA pathway for acetate assimilation. Catalyzes the reversible condensation of glyoxylate and acetyl-CoA to L-malyl-CoA and the reversible condensation of glyoxylate and propionyl-CoA to yield beta-methylmalyl-CoA. This is L-malyl-CoA/beta-methylmalyl-CoA lyase from Cereibacter sphaeroides (strain ATCC 17025 / ATH 2.4.3) (Rhodobacter sphaeroides).